Consider the following 157-residue polypeptide: Protein Smg homolog (157 aa).

The protein belongs to the Smg family.

The polypeptide is Protein Smg homolog (Shewanella denitrificans (strain OS217 / ATCC BAA-1090 / DSM 15013)).